We begin with the raw amino-acid sequence, 247 residues long: Particulate methane monooxygenase beta subunit (247 aa).

The next 6 helical transmembrane spans lie at tryptophan 23 to leucine 43, leucine 59 to leucine 79, proline 86 to phenylalanine 106, tryptophan 111 to leucine 131, alanine 145 to alanine 165, and valine 215 to glycine 235.

In terms of assembly, m.capsulatus has two forms of methane monooxygenase, a soluble (sMMO) and a membrane-bound (particulate) type (pMMO). The particulate type is a nonamer composed of three alpha:beta:gamma heterotrimeric protomers assembled into a cylindrical structure; the beta and gamma subunits comprise the bulk of the membrane-spanning regions and the soluble regions are derived primarily from alpha subunits which form two antiparallel beta-barrel-like structures each. This assembly, also called pMMO hydroxylase (pMMO-H), is proposed to associate with methanol dehydrogenase (MDH), also designated as pMMO-R, to form the pMMO-C complex which seems to have greater methane monooxygenase activity.

Its subcellular location is the membrane. The catalysed reaction is methane + a quinol + O2 = methanol + a quinone + H2O. Functionally, non-catalytic subunit of the methane monooxygenase that is responsible for the initial oxygenation of methane to methanol in methanotrophs. At least in vitro, specific quinols can replace NADH as reductants. This is Particulate methane monooxygenase beta subunit (pmoA1) from Methylococcus capsulatus (strain ATCC 33009 / NCIMB 11132 / Bath).